The chain runs to 179 residues: Large ribosomal subunit protein uL5 (179 aa).

This sequence belongs to the universal ribosomal protein uL5 family. As to quaternary structure, part of the 50S ribosomal subunit; part of the 5S rRNA/L5/L18/L25 subcomplex. Contacts the 5S rRNA and the P site tRNA. Forms a bridge to the 30S subunit in the 70S ribosome.

Functionally, this is one of the proteins that bind and probably mediate the attachment of the 5S RNA into the large ribosomal subunit, where it forms part of the central protuberance. In the 70S ribosome it contacts protein S13 of the 30S subunit (bridge B1b), connecting the 2 subunits; this bridge is implicated in subunit movement. Contacts the P site tRNA; the 5S rRNA and some of its associated proteins might help stabilize positioning of ribosome-bound tRNAs. The polypeptide is Large ribosomal subunit protein uL5 (Shewanella oneidensis (strain ATCC 700550 / JCM 31522 / CIP 106686 / LMG 19005 / NCIMB 14063 / MR-1)).